Here is a 156-residue protein sequence, read N- to C-terminus: Small ribosomal subunit protein uS7 (156 aa).

It belongs to the universal ribosomal protein uS7 family. In terms of assembly, part of the 30S ribosomal subunit. Contacts proteins S9 and S11.

In terms of biological role, one of the primary rRNA binding proteins, it binds directly to 16S rRNA where it nucleates assembly of the head domain of the 30S subunit. Is located at the subunit interface close to the decoding center, probably blocks exit of the E-site tRNA. The sequence is that of Small ribosomal subunit protein uS7 from Psychromonas ingrahamii (strain DSM 17664 / CCUG 51855 / 37).